The primary structure comprises 172 residues: Envelope protein UL45 (172 aa).

Residues 1 to 27 (MAFRASGPAYQPLAPAASPARARVPAV) lie on the Intravirion side of the membrane. Residues 28–48 (AWIGVGAIVGAFALVAALVLV) form a helical; Signal-anchor for type II membrane protein membrane-spanning segment. Over 49–172 (PPRSSWGLSP…TSIRNALGLP (124 aa)) the chain is Virion surface.

Belongs to the herpesviridae HHV-1 UL45 family.

The protein localises to the virion membrane. Functionally, important virulence factor of HSV neurotropism. Seems to be required for glycoprotein B-induced fusion. Dispensable for growth in vitro. The sequence is that of Envelope protein UL45 from Homo sapiens (Human).